A 107-amino-acid chain; its full sequence is Magnetosome protein MmsF (107 aa).

Topologically, residues 1 to 13 are cytoplasmic; sequence MTEAILRSTLGAR. Residues 14-34 form a helical membrane-spanning segment; sequence TTVMAALSYLSVLCFVPLLVD. The Lumenal segment spans residues 35 to 46; the sequence is RDDEFVYFHAKQ. The chain crosses the membrane as a helical span at residues 47–67; that stretch reads GLVIWMWGVLALFALHVPVLG. At 68–69 the chain is on the cytoplasmic side; it reads KW. Residues 70-90 traverse the membrane as a helical segment; that stretch reads IFGFSSMGVLVFSLLGLVSVV. Over 91–107 the chain is Lumenal; it reads FQRAWKLPLISWVAHRI.

This sequence belongs to the magnetosome MamF/MmsF protein family. In terms of assembly, may oligomerize.

The protein resides in the magnetosome membrane. Its activity is regulated as follows. Its function may be negatively regulated by one of the MamGFDC proteins. Plays a major role in synthesis of cubooctahedral magnetite crystals by controlling crystal growth and morphology after nucleation. Has a partially redundant function with MamF. When overexpressed in E.coli the soluble protein self assembles into shells of about 36 nm. This protein mediates the formation of magnetite nanoparticles from a solution of Fe(2+) and Fe(3+) sulfate; the crystals are larger and lack alternative iron oxide/oxyhydroxide species seen in the protein's absence. The polypeptide is Magnetosome protein MmsF (Paramagnetospirillum magneticum (strain ATCC 700264 / AMB-1) (Magnetospirillum magneticum)).